Consider the following 155-residue polypeptide: Rusticyanin (155 aa).

The Plastocyanin-like domain occupies 53–155; that stretch reads SFEVHDKKNP…TGMFGKIIVK (103 aa). Cu cation contacts are provided by H85, C138, H143, and M148.

Monomer. Cu cation serves as cofactor.

It localises to the periplasm. Its function is as follows. Electron carrier from cytochrome c552 to the A-type oxidase. This is Rusticyanin (rus) from Acidithiobacillus ferrooxidans (Thiobacillus ferrooxidans).